The primary structure comprises 505 residues: Peroxisome proliferator-activated receptor gamma (505 aa).

Thr-84 carries an O-linked (GlcNAc) threonine glycan. Residue Ser-112 is modified to Phosphoserine; by MAPK. Positions 136–210 form a DNA-binding region, nuclear receptor; the sequence is AIECRVCGDK…VGMSHNAIRF (75 aa). 2 consecutive NR C4-type zinc fingers follow at residues 139-159 and 176-198; these read CRVC…CEGC and CDLN…FQKC. The interval 205–280 is interaction with FAM120B; it reads HNAIRFGRMP…DKSPFVIYDM (76 aa). In terms of domain architecture, NR LBD spans 238-503; the sequence is DLRALAKHLY…HPLLQEIYKD (266 aa). Lys-252 is covalently cross-linked (Glycyl lysine isopeptide (Lys-Gly) (interchain with G-Cter in ubiquitin)). Residues 495–503 carry the 9aaTAD motif; the sequence is PLLQEIYKD.

This sequence belongs to the nuclear hormone receptor family. NR1 subfamily. Heterodimer with other nuclear receptors, such as RXRA. The heterodimer with the retinoic acid receptor RXRA is called adipocyte-specific transcription factor ARF6. Interacts with NCOA6 coactivator, leading to a strong increase in transcription of target genes. Interacts with coactivator PPARBP, leading to a mild increase in transcription of target genes. Interacts with NOCA7 in a ligand-inducible manner. Interacts with NCOA1 and NCOA2 LXXLL motifs. Interacts with ASXL1, ASXL2, DNTTIP2, FAM120B, MAP2K1/MEK1, NR0B2, PDPK1, PRDM16, PRMT2 and TGFB1I1. Interacts (when activated by agonist) with PPP5C. Interacts with HELZ2 and THRAP3; the interaction stimulates the transcriptional activity of PPARG. Interacts with PER2, the interaction is ligand dependent and blocks PPARG recruitment to target promoters. Interacts with NOCT. Interacts with FOXO1 (acetylated form). Interacts with ACTN4. Interacts (when in the liganded conformation) with GPS2. Interacts with CRY1 and CRY2 in a ligand-dependent manner. In the absence of hormonal ligand, interacts with TACC1. In macrophages, interacts with PAQR3 and STUB1; the interactions promote PPARG poylubiquitination and STUB1-mediated degradation. O-GlcNAcylation at Thr-84 reduces transcriptional activity in adipocytes. Post-translationally, phosphorylated in basal conditions and dephosphorylated when treated with the ligand. May be dephosphorylated by PPP5C. The phosphorylated Ser-112 form is recognized by PER2 and repressed, dephosphorylation at Ser-112 induces adipogenic activity. Ser-112 phosphorylation levels are reduced by 65% in brown adipose tissue compared to white adipose tissue. In terms of processing, ubiquitinated by E3 ubiquitin-protein ligase complex containing FBXO9; leading to proteasomal degradation. Ubiquitinated by E3 ubiquitin-protein ligase complex containing FBXO9; leading to proteasomal degradation. Ubiquitinated at Lys-252 by TRIM55 leading to proteasomal degradation. Ubiquitinated by E3 ubiquitin-protein ligase STUB1/CHIP; leading to proteasomal degradation. In terms of tissue distribution, highest expression in white and brown adipose tissue. Also found in liver, skeletal muscle, heart, adrenal gland, spleen, kidney and intestine. Isoform 2 is more abundant than isoform 1 in adipose tissue.

The protein resides in the nucleus. The protein localises to the cytoplasm. Its activity is regulated as follows. PDPK1 activates its transcriptional activity independently of its kinase activity. Nuclear receptor that binds peroxisome proliferators such as hypolipidemic drugs and fatty acids. Once activated by a ligand, the nuclear receptor binds to DNA specific PPAR response elements (PPRE) and modulates the transcription of its target genes, such as acyl-CoA oxidase. It therefore controls the peroxisomal beta-oxidation pathway of fatty acids. Key regulator of adipocyte differentiation and glucose homeostasis. ARF6 acts as a key regulator of the tissue-specific adipocyte P2 (aP2) enhancer. Acts as a critical regulator of gut homeostasis by suppressing NF-kappa-B-mediated pro-inflammatory responses. Plays a role in the regulation of cardiovascular circadian rhythms by regulating the transcription of BMAL1 in the blood vessels. This is Peroxisome proliferator-activated receptor gamma (Pparg) from Mus musculus (Mouse).